The primary structure comprises 201 residues: LexA repressor (201 aa).

Positions 28–48 (LREIGGHLGINGTLGVMKHLD) form a DNA-binding region, H-T-H motif. Residues Ser120 and Lys157 each act as for autocatalytic cleavage activity in the active site.

The protein belongs to the peptidase S24 family. As to quaternary structure, homodimer.

It carries out the reaction Hydrolysis of Ala-|-Gly bond in repressor LexA.. In terms of biological role, represses a number of genes involved in the response to DNA damage (SOS response), including recA and lexA. In the presence of single-stranded DNA, RecA interacts with LexA causing an autocatalytic cleavage which disrupts the DNA-binding part of LexA, leading to derepression of the SOS regulon and eventually DNA repair. The chain is LexA repressor from Geotalea uraniireducens (strain Rf4) (Geobacter uraniireducens).